A 61-amino-acid polypeptide reads, in one-letter code: MRQGCALTLMLLVVVCAALSAAQLNFSTGWGRRYADPNADPMAFLYKLIQIEARKLAGCSN.

The N-terminal stretch at 1–22 (MRQGCALTLMLLVVVCAALSAA) is a signal peptide. Q23 carries the pyrrolidone carboxylic acid modification. Tryptophan amide is present on W30.

This sequence belongs to the AKH/HRTH/RPCH family. In terms of assembly, adipokinetic hormone precursor-related peptide (APRP) can form three type of disulfide-bond dimers: p1 (alpha-alpha), p2 (alpha-beta), and p3 (beta-beta).

Its subcellular location is the secreted. This hormone, released from cells in the corpora cardiaca, causes release of diglycerides from the fat body and stimulation of muscles to use these diglycerides as an energy source during energy-demanding processes. The sequence is that of Adipokinetic prohormone type 2 from Schistocerca nitens (Vagrant locust).